We begin with the raw amino-acid sequence, 256 residues long: Homeobox protein ceh-34 (256 aa).

The segment at residues 134–193 (GEETNYCFKSKSRNVLRDAYKKCQYPSVEDKRRLAQQTELSIIQVSNWFKNKRQRERAAG) is a DNA-binding region (homeobox). The tract at residues 187-233 (QRERAAGQLDRSSARSNDSDDGSSGCESKPPMNIDSPAPPPLPTSFD) is disordered.

The protein belongs to the SIX/Sine oculis homeobox family. As to quaternary structure, interacts (via N-terminus) with eya-1 (via C-terminus). In terms of tissue distribution, shows expression only in the pharyngeal nervous system.

The protein localises to the nucleus. In terms of biological role, acts as a transcription regulator. Binds to the sequence motif 5'-TCAGGTT-3'. Binds to the cis-regulatory element of proapoptotic factor egl-1 gene and together with eya-1 activates egl-1 expression to promote motor neuron M4 sister cell apoptosis. Also promotes apoptosis of I1 pharyngeal neuron sister cell. Together with eya-1, required to specify the coelomocyte fate in embryonic and postembryonic precursors. Required to establish and maintain the differentiation of all 14 classes of pharyngeal neurons. Controls the neurotransmitter signaling capacity of the neurons and is required for the expression of some neurotransmitter receptors including mgl-1, glr-2 and ser-7. Affects the neuropeptidergic identity of pharyngeal neurons. Required for the pharyngeal expression of sensory receptors gur-3, glu-7 and str-97, antimicrobial defense genes such as spp-12, gpla-1/flr-2 and htrl-1, and pan-pharyngeal nervous system genes such as kin-36. Required to establish and maintain pharyngeal nervous system architecture by ensuring correct axon and synapse organization. Required for expression of eya-1 which may act as a transcriptional cofactor to specify distinct pharyngeal neuron types. Cooperates with several homeobox proteins to specify distinct pharyngeal neuron types including unc-86 in the NSM and I1 neurons, ceh-14 in the I2 neuron, ceh-2 and pros-1 in the I3 neuron, ceh-45 in the M1 neuron, ceh-2 in the M3 neuron, ceh-28 and zag-1 in the M4 neuron, and vab-15 in the M5 neuron. The chain is Homeobox protein ceh-34 (ceh-34) from Caenorhabditis elegans.